We begin with the raw amino-acid sequence, 184 residues long: Protein N-terminal glutamine amidohydrolase (184 aa).

Active-site residues include Cys14, His63, and Asp78.

This sequence belongs to the NTAQ1 family. In terms of assembly, monomer.

It carries out the reaction N-terminal L-glutaminyl-[protein] + H2O = N-terminal L-glutamyl-[protein] + NH4(+). Mediates the side-chain deamidation of N-terminal glutamine residues to glutamate, an important step in N-end rule pathway of protein degradation. Conversion of the resulting N-terminal glutamine to glutamate renders the protein susceptible to arginylation, polyubiquitination and degradation as specified by the N-end rule. Does not act on substrates with internal or C-terminal glutamine and does not act on non-glutamine residues in any position. This chain is Protein N-terminal glutamine amidohydrolase, found in Caenorhabditis elegans.